We begin with the raw amino-acid sequence, 286 residues long: 4-hydroxybenzoate octaprenyltransferase (286 aa).

7 helical membrane passes run 21 to 40, 95 to 115, 142 to 162, 167 to 187, 210 to 230, 235 to 255, and 266 to 286; these read GTLL…AGGM, ILFV…NGLV, FLGI…TGEV, WWLF…YAMV, QIIG…GWSA, LYGL…MLIF, and FLNN…DYLI.

The protein belongs to the UbiA prenyltransferase family. The cofactor is Mg(2+).

It localises to the cell inner membrane. It catalyses the reaction all-trans-octaprenyl diphosphate + 4-hydroxybenzoate = 4-hydroxy-3-(all-trans-octaprenyl)benzoate + diphosphate. The protein operates within cofactor biosynthesis; ubiquinone biosynthesis. Functionally, catalyzes the prenylation of para-hydroxybenzoate (PHB) with an all-trans polyprenyl group. Mediates the second step in the final reaction sequence of ubiquinone-8 (UQ-8) biosynthesis, which is the condensation of the polyisoprenoid side chain with PHB, generating the first membrane-bound Q intermediate 3-octaprenyl-4-hydroxybenzoate. In Shewanella baltica (strain OS223), this protein is 4-hydroxybenzoate octaprenyltransferase.